The sequence spans 521 residues: 2-isopropylmalate synthase (521 aa).

In terms of domain architecture, Pyruvate carboxyltransferase spans 12 to 274 (VIIFDTTLRD…WNKIDTTMLT (263 aa)). Positions 21, 209, 211, and 245 each coordinate Mn(2+). The interval 398–521 (KLLSLTVIAG…DLPVPEAAAS (124 aa)) is regulatory domain.

This sequence belongs to the alpha-IPM synthase/homocitrate synthase family. LeuA type 1 subfamily. In terms of assembly, homodimer. The cofactor is Mn(2+).

Its subcellular location is the cytoplasm. It catalyses the reaction 3-methyl-2-oxobutanoate + acetyl-CoA + H2O = (2S)-2-isopropylmalate + CoA + H(+). It functions in the pathway amino-acid biosynthesis; L-leucine biosynthesis; L-leucine from 3-methyl-2-oxobutanoate: step 1/4. In terms of biological role, catalyzes the condensation of the acetyl group of acetyl-CoA with 3-methyl-2-oxobutanoate (2-ketoisovalerate) to form 3-carboxy-3-hydroxy-4-methylpentanoate (2-isopropylmalate). This chain is 2-isopropylmalate synthase, found in Rhodopseudomonas palustris (strain BisB18).